Consider the following 109-residue polypeptide: Small serum protein 2 (109 aa).

Residues 1–19 (MRVFFSLIIFSFMLATCQG) form the signal peptide. Intrachain disulfides connect Cys21–Cys72, Cys39–Cys64, Cys59–Cys93, Cys62–Cys71, and Cys84–Cys107.

In terms of assembly, forms a stable, non-covalent complex with serotriflin.

The protein resides in the secreted. Functionally, may serve as a self-defense protein against the toxic effects of the snake venom during accidental envenomation. Does not show inhibitory activity towards brevilysin H6. In Protobothrops flavoviridis (Habu), this protein is Small serum protein 2.